We begin with the raw amino-acid sequence, 387 residues long: F-box only protein 4 (387 aa).

Residues Ser12 and Ser48 each carry the phosphoserine modification. In terms of domain architecture, F-box spans 56 to 102; sequence ASTLTRLPIDVQLYILSFLSPHDLCQLGSTNHYWNETVRDPILWRYF.

As to quaternary structure, homodimer. Part of the SCF (SKP1-CUL1-F-box) E3 ubiquitin-protein ligase complex SCF(FBXO4) formed of CUL1, SKP1, RBX1 and FBXO4. Interacts with TERF1; this interaction is prevented in the presence of GNL3L. Identified in a complex with CRYAB and CCND1. Phosphorylation at Ser-12 varies during the cell cycle. It is low in resting cells and high in the S phase and the G2/M phase of the cell cycle. Phosphorylation is decreased during late G1 phase. Phosphorylation at Ser-12 promotes homodimerization and is necessary for optimal ubiquitin ligase activity towards CCND1.

Its subcellular location is the cytoplasm. Its pathway is protein modification; protein ubiquitination. Its function is as follows. Substrate recognition component of a SCF (SKP1-CUL1-F-box protein) E3 ubiquitin-protein ligase complex that mediates the ubiquitination and subsequent proteasomal degradation of target proteins. Promotes ubiquitination of cyclin-D1 (CCND1) and its subsequent proteasomal degradation. However, it does not act as a major regulator of CCND1 stability during the G1/S transition. Recognizes TERF1 and promotes its ubiquitination together with UBE2D1. Promotes ubiquitination of FXR1 following phosphorylation of FXR1 by GSK3B, leading to FXR1 degradation by the proteasome. This chain is F-box only protein 4 (FBXO4), found in Homo sapiens (Human).